A 324-amino-acid polypeptide reads, in one-letter code: Ribose-phosphate pyrophosphokinase 1 (324 aa).

Residues 39 to 41 and 98 to 99 contribute to the ATP site; these read DGE and RQ. Mg(2+) is bound by residues His132 and Asp174. Lys197 is an active-site residue. D-ribose 5-phosphate is bound by residues Arg199, Asp223, and 227 to 231; that span reads DTAGT.

Belongs to the ribose-phosphate pyrophosphokinase family. Class I subfamily. In terms of assembly, homohexamer. Mg(2+) is required as a cofactor.

The protein resides in the cytoplasm. The enzyme catalyses D-ribose 5-phosphate + ATP = 5-phospho-alpha-D-ribose 1-diphosphate + AMP + H(+). Its pathway is metabolic intermediate biosynthesis; 5-phospho-alpha-D-ribose 1-diphosphate biosynthesis; 5-phospho-alpha-D-ribose 1-diphosphate from D-ribose 5-phosphate (route I): step 1/1. Functionally, involved in the biosynthesis of the central metabolite phospho-alpha-D-ribosyl-1-pyrophosphate (PRPP) via the transfer of pyrophosphoryl group from ATP to 1-hydroxyl of ribose-5-phosphate (Rib-5-P). The polypeptide is Ribose-phosphate pyrophosphokinase 1 (Lactococcus lactis subsp. lactis (strain IL1403) (Streptococcus lactis)).